A 299-amino-acid polypeptide reads, in one-letter code: MKPDAHHVKQFLLRLQDDICQTLSAVDGANFVEDSWRREAGGGGRSRVLRNGGIFEQAGVNFSHVHGDAMPASATAHRPELAGRSFEAMGVSLVVHPHNPYIPTSHANVRFFIAEKPGADPVWWFGGGFDLTPYYGFEEDAVHWHRTARDLCQPFGDDVYPRYKKWCDDYFFLKHRNEQRGVGGLFFDDLNTPDFDHCFDFMQAVGNGYTRAYLPIVERRKAMVWGERERNFQLYRRGRYVEFNLVWDRGTLFGLQTGGRTESILMSMPPLVRWEYDWQPEAGSPEAALSEFIQVRDWI.

Position 92 (Ser-92) interacts with substrate. Residues His-96 and His-106 each contribute to the a divalent metal cation site. The active-site Proton donor is His-106. 108 to 110 (NVR) contributes to the substrate binding site. A divalent metal cation is bound by residues His-145 and His-175. Residues 240-275 (YVEFNLVWDRGTLFGLQTGGRTESILMSMPPLVRWE) form an important for dimerization region. Position 258-260 (258-260 (GGR)) interacts with substrate.

This sequence belongs to the aerobic coproporphyrinogen-III oxidase family. In terms of assembly, homodimer. A divalent metal cation is required as a cofactor.

It localises to the cytoplasm. It carries out the reaction coproporphyrinogen III + O2 + 2 H(+) = protoporphyrinogen IX + 2 CO2 + 2 H2O. Its pathway is porphyrin-containing compound metabolism; protoporphyrin-IX biosynthesis; protoporphyrinogen-IX from coproporphyrinogen-III (O2 route): step 1/1. Involved in the heme biosynthesis. Catalyzes the aerobic oxidative decarboxylation of propionate groups of rings A and B of coproporphyrinogen-III to yield the vinyl groups in protoporphyrinogen-IX. The polypeptide is Oxygen-dependent coproporphyrinogen-III oxidase (Salmonella heidelberg (strain SL476)).